Here is a 566-residue protein sequence, read N- to C-terminus: E3 ubiquitin-protein ligase RNF220 (566 aa).

Lys277 participates in a covalent cross-link: Glycyl lysine isopeptide (Lys-Gly) (interchain with G-Cter in SUMO2). A disordered region spans residues 277 to 297 (KREGESPTASPHSSATDDLHH). A Phosphoserine modification is found at Ser390. Residues 485-513 (EDSAVTTFEALKARVRELERQLSRGDRYK) adopt a coiled-coil conformation. Residues 514–522 (CLICMDSYS) are required for targeting to the cytoplasm. The RING-type zinc-finger motif lies at 514–553 (CLICMDSYSMPLTSIQCWHVHCEECWLRTLGAKKLCPQCN).

Interacts with SIN3B. Interacts with CTNNB1 (via Armadillo repeats 2-8). Interacts with USP7 (via MATH domain). Auto-ubiquitinated; leads to proteasomal degradation.

The protein resides in the cytoplasm. The protein localises to the nucleus. The enzyme catalyses S-ubiquitinyl-[E2 ubiquitin-conjugating enzyme]-L-cysteine + [acceptor protein]-L-lysine = [E2 ubiquitin-conjugating enzyme]-L-cysteine + N(6)-ubiquitinyl-[acceptor protein]-L-lysine.. Its pathway is protein modification; protein ubiquitination. E3 ubiquitin-protein ligase that promotes the ubiquitination and proteasomal degradation of SIN3B. Independently of its E3 ligase activity, acts as a CTNNB1 stabilizer through USP7-mediated deubiquitination of CTNNB1 and promotes Wnt signaling. Plays a critical role in the regulation of nuclear lamina. The polypeptide is E3 ubiquitin-protein ligase RNF220 (RNF220) (Macaca fascicularis (Crab-eating macaque)).